A 445-amino-acid polypeptide reads, in one-letter code: E3 ubiquitin-protein ligase pellino homolog 3 (445 aa).

The disordered stretch occupies residues 1-24 (MVLEGNPDVGSPRTSDLQHPGSQG). A Phosphoserine modification is found at serine 11. Polar residues predominate over residues 12–24 (PRTSDLQHPGSQG).

This sequence belongs to the pellino family. As to quaternary structure, interacts with TRAF6, MAP3K14 and MAP3K7. Post-translationally, phosphorylated by IRAK1 enhancing its E3 ligase activity.

It carries out the reaction S-ubiquitinyl-[E2 ubiquitin-conjugating enzyme]-L-cysteine + [acceptor protein]-L-lysine = [E2 ubiquitin-conjugating enzyme]-L-cysteine + N(6)-ubiquitinyl-[acceptor protein]-L-lysine.. Its pathway is protein modification; protein ubiquitination. Its function is as follows. E3 ubiquitin ligase catalyzing the covalent attachment of ubiquitin moieties onto substrate proteins. Involved in the TLR and IL-1 signaling pathways via interaction with the complex containing IRAK kinases and TRAF6. Mediates 'Lys-63'-linked polyubiquitination of IRAK1. Can activate AP1/JUN and ELK1. Acts as a regulator of innate immunity by mediating 'Lys-63'-linked polyubiquitination of RIPK2 downstream of NOD1 and NOD2, thereby transforming RIPK2 into a scaffolding protein for downstream effectors, ultimately leading to activation of the NF-kappa-B and MAP kinases signaling. Catalyzes 'Lys-63'-linked polyubiquitination of RIPK2 in parallel of XIAP. The protein is E3 ubiquitin-protein ligase pellino homolog 3 of Mus musculus (Mouse).